We begin with the raw amino-acid sequence, 246 residues long: Type III pantothenate kinase (246 aa).

ATP is bound at residue 11-18; it reads DIGNSFIK. Residues Y95 and 102–105 each bind substrate; that span reads GVDR. D104 serves as the catalytic Proton acceptor. A K(+)-binding site is contributed by D125. T128 is a binding site for ATP. T179 is a substrate binding site.

It belongs to the type III pantothenate kinase family. Homodimer. The cofactor is NH4(+). K(+) serves as cofactor.

It is found in the cytoplasm. The catalysed reaction is (R)-pantothenate + ATP = (R)-4'-phosphopantothenate + ADP + H(+). It functions in the pathway cofactor biosynthesis; coenzyme A biosynthesis; CoA from (R)-pantothenate: step 1/5. Functionally, catalyzes the phosphorylation of pantothenate (Pan), the first step in CoA biosynthesis. This is Type III pantothenate kinase from Pseudoalteromonas atlantica (strain T6c / ATCC BAA-1087).